The following is a 380-amino-acid chain: Gibberellin 20 oxidase 3 (380 aa).

Residues 221–321 (DSDSIFRLNY…RKTFAFFLCP (101 aa)) form the Fe2OG dioxygenase domain. H246, D248, and H302 together coordinate Fe cation. Residue R312 is part of the active site.

It belongs to the iron/ascorbate-dependent oxidoreductase family. GA20OX subfamily. Fe(2+) serves as cofactor. It depends on L-ascorbate as a cofactor. As to expression, expressed at high level in developing siliques. Detected in seeds, roots, leaves and inflorescences. In seeds, specifically detected at the outer layer of the outer integument.

It catalyses the reaction gibberellin A12 + 2 2-oxoglutarate + 3 O2 + H(+) = gibberellin A9 + 2 succinate + 3 CO2 + 2 H2O. It carries out the reaction gibberellin A12 + 3 2-oxoglutarate + 3 O2 = gibberellin A25 + 3 succinate + 3 CO2 + H2O + H(+). The enzyme catalyses gibberellin A53 + 2 2-oxoglutarate + 3 O2 + H(+) = gibberellin A20 + 2 succinate + 3 CO2 + 2 H2O. The protein operates within plant hormone biosynthesis; gibberellin biosynthesis. In terms of biological role, key oxidase enzyme in the biosynthesis of gibberellin that catalyzes the conversion of GA12 and GA53 to GA9 and GA20 respectively, via a three-step oxidation at C-20 of the GA skeleton, and GA25 is also formed as a minor product. GA53 is less effectively oxidized than GA12. The chain is Gibberellin 20 oxidase 3 (GA20OX3) from Arabidopsis thaliana (Mouse-ear cress).